A 268-amino-acid chain; its full sequence is 3-deoxy-manno-octulosonate cytidylyltransferase (268 aa).

Belongs to the KdsB family.

The protein localises to the cytoplasm. It catalyses the reaction 3-deoxy-alpha-D-manno-oct-2-ulosonate + CTP = CMP-3-deoxy-beta-D-manno-octulosonate + diphosphate. It participates in nucleotide-sugar biosynthesis; CMP-3-deoxy-D-manno-octulosonate biosynthesis; CMP-3-deoxy-D-manno-octulosonate from 3-deoxy-D-manno-octulosonate and CTP: step 1/1. The protein operates within bacterial outer membrane biogenesis; lipopolysaccharide biosynthesis. Its function is as follows. Activates KDO (a required 8-carbon sugar) for incorporation into bacterial lipopolysaccharide in Gram-negative bacteria. This Psychrobacter cryohalolentis (strain ATCC BAA-1226 / DSM 17306 / VKM B-2378 / K5) protein is 3-deoxy-manno-octulosonate cytidylyltransferase.